A 454-amino-acid chain; its full sequence is MALNDETKVVVLLLPFPVQGHLNPFLQLSHLIAAQNIAVHYVGTVTHIRQAKLRYHNATSNIHFHAFEVPPYVSPPPNPEDDFPSHLIPSFEASAHLREPVGKLLQSLSSQAKRVVLINDSLMASVAQDAANFSNVERYCFQVFSALNTAGDFWEQMGKPPLADFHFPDIPSLQGCISAQFTDFLTAQNEFRKFNNGDIYNTSRVIEGPYVELLERFNGGKEVWALGPFTPLAVEKKDSIGFSHPCMEWLDKQEPSSVIYVSFGTTTALRDEQIQELATGLEQSKQKFIWVLRDADKGDIFDGSEAKRYELPEGFEERVEGMGLVVRDWAPQMEILSHSSTGGFMSHCGWNSCLESLTRGVPMATWAMHSDQPRNAVLVTDVLKVGLIVKDWEQRKSLVSASVIENAVRRLMETKEGDEIRKRAVKLKDEIHRSMDEGGVSRMEMASFIAHISR.

It belongs to the UDP-glycosyltransferase family. As to expression, high level in young seeds, less in older seeds and very low in roots.

It carries out the reaction zeatin + UDP-alpha-D-xylose = O-beta-D-xylosylzeatin + UDP + H(+). In terms of biological role, utilizes UDP-xylose as the sugar donor and catalyzes the formation of o-xylosylzeatin from zeatin. Does not act on UDP-glucose. The chain is Zeatin O-xylosyltransferase from Phaseolus vulgaris (Kidney bean).